The chain runs to 510 residues: NAD(P)H-quinone oxidoreductase subunit 2 A, chloroplastic (510 aa).

13 helical membrane passes run 24-44 (LLLF…GLIL), 59-79 (WFYF…LFRW), 99-119 (IFQF…VEYI), 124-144 (MAIT…MFLC), 149-169 (LITI…LSGY), 183-203 (YLLM…WLYG), 229-249 (ISIA…PAPF), 295-315 (WHLL…LIAI), 323-343 (MLAY…IVGD), 347-367 (GYAS…GTFA), 395-415 (ALSS…AGFF), 418-438 (LHLF…IGLL), and 484-504 (MIVC…IIAI).

This sequence belongs to the complex I subunit 2 family. NDH is composed of at least 16 different subunits, 5 of which are encoded in the nucleus.

The protein localises to the plastid. The protein resides in the chloroplast thylakoid membrane. It carries out the reaction a plastoquinone + NADH + (n+1) H(+)(in) = a plastoquinol + NAD(+) + n H(+)(out). The enzyme catalyses a plastoquinone + NADPH + (n+1) H(+)(in) = a plastoquinol + NADP(+) + n H(+)(out). Functionally, NDH shuttles electrons from NAD(P)H:plastoquinone, via FMN and iron-sulfur (Fe-S) centers, to quinones in the photosynthetic chain and possibly in a chloroplast respiratory chain. The immediate electron acceptor for the enzyme in this species is believed to be plastoquinone. Couples the redox reaction to proton translocation, and thus conserves the redox energy in a proton gradient. The protein is NAD(P)H-quinone oxidoreductase subunit 2 A, chloroplastic of Amborella trichopoda.